A 312-amino-acid chain; its full sequence is 4-diphosphocytidyl-2-C-methyl-D-erythritol kinase (312 aa).

The active site involves Lys-10. 105-115 (PVAGGMAGGSA) provides a ligand contact to ATP. Asp-146 is an active-site residue.

The protein belongs to the GHMP kinase family. IspE subfamily.

The enzyme catalyses 4-CDP-2-C-methyl-D-erythritol + ATP = 4-CDP-2-C-methyl-D-erythritol 2-phosphate + ADP + H(+). The protein operates within isoprenoid biosynthesis; isopentenyl diphosphate biosynthesis via DXP pathway; isopentenyl diphosphate from 1-deoxy-D-xylulose 5-phosphate: step 3/6. In terms of biological role, catalyzes the phosphorylation of the position 2 hydroxy group of 4-diphosphocytidyl-2C-methyl-D-erythritol. The protein is 4-diphosphocytidyl-2-C-methyl-D-erythritol kinase of Corynebacterium glutamicum (strain R).